A 132-amino-acid chain; its full sequence is Small ribosomal subunit protein uS8 (132 aa).

Belongs to the universal ribosomal protein uS8 family. As to quaternary structure, part of the 30S ribosomal subunit. Contacts proteins S5 and S12.

One of the primary rRNA binding proteins, it binds directly to 16S rRNA central domain where it helps coordinate assembly of the platform of the 30S subunit. The sequence is that of Small ribosomal subunit protein uS8 from Psychrobacter cryohalolentis (strain ATCC BAA-1226 / DSM 17306 / VKM B-2378 / K5).